A 62-amino-acid polypeptide reads, in one-letter code: Small ribosomal subunit protein bS21 (62 aa).

The interval 43–62 (EKRKRKAMALQKQRKRRSRY) is disordered. Over residues 44-62 (KRKRKAMALQKQRKRRSRY) the composition is skewed to basic residues.

The protein belongs to the bacterial ribosomal protein bS21 family.

The polypeptide is Small ribosomal subunit protein bS21 (Trichodesmium erythraeum (strain IMS101)).